A 683-amino-acid chain; its full sequence is U4/U6 small nuclear ribonucleoprotein Prp3 (683 aa).

Positions 1–87 (MALSKRELDE…HSKSSSDRSR (87 aa)) constitute a PWI domain. The span at 73–107 (GRSSRHSKSSSDRSRKRDLKEVFGDDSEISKESSG) shows a compositional bias: basic and acidic residues. The disordered stretch occupies residues 73 to 135 (GRSSRHSKSS…IPGPPSESPG (63 aa)). Residue Lys-139 forms a Glycyl lysine isopeptide (Lys-Gly) (interchain with G-Cter in SUMO2) linkage. A disordered region spans residues 153-183 (IEERKKQLSFISPPTPQPKTPSSSQPERLPI). Ser-164 is modified (phosphoserine). Phosphothreonine is present on Thr-167. Glycyl lysine isopeptide (Lys-Gly) (interchain with G-Cter in SUMO2) cross-links involve residues Lys-244 and Lys-252. The tract at residues 416 to 550 (NLVEHPAQLN…VHISVYRVRN (135 aa)) is mediates interaction with SART3. Ser-619 is modified (phosphoserine).

In terms of assembly, component of the precatalytic spliceosome (spliceosome B complex). Component of the U4/U6-U5 tri-snRNP complex, a building block of the precatalytic spliceosome (spliceosome B complex). The U4/U6-U5 tri-snRNP complex is composed of the U4, U6 and U5 snRNAs and at least PRPF3, PRPF4, PRPF6, PRPF8, PRPF31, SNRNP200, TXNL4A, SNRNP40, SNRPB, SNRPD1, SNRPD2, SNRPD3, SNRPE, SNRPF, SNRPG, DDX23, CD2BP2, PPIH, SNU13, EFTUD2, SART1 and USP39, plus LSM2, LSM3, LSM4, LSM5, LSM6, LSM7 and LSM8. Interacts directly with PRPF4. Part of a heteromeric complex containing PPIH, PRPF3 and PRPF4 that is stable in the absence of RNA. Interacts with SART3; the interaction is direct and recruits the deubiquitinase USP4 to PRPF3. Interacts with PRPF19. Interacts ('Lys-63'-linked polyubiquitinated) with PRPF8 (via the MPN (JAB/Mov34) domain); may stabilize the U4/U6-U5 tri-snRNP complex. Interacts with ERCC6. Ubiquitinated. Undergoes 'Lys-63'-linked polyubiquitination by PRPF19 and deubiquitination by USP4. 'Lys-63'-linked ubiquitination increases the affinity for PRPF8 and may regulate the assembly of the U4/U6-U5 tri-snRNP complex.

The protein localises to the nucleus. The protein resides in the nucleus speckle. Its function is as follows. Plays a role in pre-mRNA splicing as component of the U4/U6-U5 tri-snRNP complex that is involved in spliceosome assembly, and as component of the precatalytic spliceosome (spliceosome B complex). This Bos taurus (Bovine) protein is U4/U6 small nuclear ribonucleoprotein Prp3 (PRPF3).